A 184-amino-acid polypeptide reads, in one-letter code: Ribosome-recycling factor (184 aa).

This sequence belongs to the RRF family.

The protein resides in the cytoplasm. Its function is as follows. Responsible for the release of ribosomes from messenger RNA at the termination of protein biosynthesis. May increase the efficiency of translation by recycling ribosomes from one round of translation to another. The sequence is that of Ribosome-recycling factor from Mycoplasma pneumoniae (strain ATCC 29342 / M129 / Subtype 1) (Mycoplasmoides pneumoniae).